The primary structure comprises 197 residues: MADSMQLAGIVLAGGESRRMGRDKATLPGPRGAATLLEYVVGVLIQRCDPIFVMAAPGQPLPEVTARIIRDEIRGQGPLPATGRGLRAAAEAGARYAFVCAVDMPLLSPELIDDLVHLATETNAEVVLPWDGRSHYLASLYRTDLAERIDRLVAGGARSMRALIDASDAQQIVLPESRFLANVNTEADLRALAQARA.

Residues 12–14 (LAG), Lys24, Asp71, and Asp103 each bind GTP. Mg(2+) is bound at residue Asp103.

This sequence belongs to the MobA family. Mg(2+) serves as cofactor.

The protein localises to the cytoplasm. It catalyses the reaction Mo-molybdopterin + GTP + H(+) = Mo-molybdopterin guanine dinucleotide + diphosphate. Its function is as follows. Transfers a GMP moiety from GTP to Mo-molybdopterin (Mo-MPT) cofactor (Moco or molybdenum cofactor) to form Mo-molybdopterin guanine dinucleotide (Mo-MGD) cofactor. This Mycolicibacterium paratuberculosis (strain ATCC BAA-968 / K-10) (Mycobacterium paratuberculosis) protein is Probable molybdenum cofactor guanylyltransferase.